The sequence spans 527 residues: Berberine bridge enzyme-like 8 (527 aa).

The signal sequence occupies residues 1–20 (MKYALILVLFFVVFIWQSSS). The cysteines at positions 31 and 93 are disulfide-linked. N-linked (GlcNAc...) asparagine glycans are attached at residues Asn51 and Asn68. In terms of domain architecture, FAD-binding PCMH-type spans 71 to 247 (STPKPFLIIA…LAYKINLVEV (177 aa)). Positions 108–172 (HDYDGLSYVT…KTLAYPAGIC (65 aa)) form a cross-link, 6-(S-cysteinyl)-8alpha-(pros-histidyl)-FAD (His-Cys). 3 N-linked (GlcNAc...) asparagine glycosylation sites follow: Asn250, Asn263, and Asn292.

This sequence belongs to the oxygen-dependent FAD-linked oxidoreductase family. The cofactor is FAD. Post-translationally, the FAD cofactor is bound via a bicovalent 6-S-cysteinyl, 8alpha-N1-histidyl FAD linkage.

Its subcellular location is the secreted. It is found in the cell wall. The chain is Berberine bridge enzyme-like 8 from Arabidopsis thaliana (Mouse-ear cress).